The following is a 548-amino-acid chain: Probable malate:quinone oxidoreductase (548 aa).

It belongs to the MQO family. It depends on FAD as a cofactor.

The catalysed reaction is (S)-malate + a quinone = a quinol + oxaloacetate. It participates in carbohydrate metabolism; tricarboxylic acid cycle; oxaloacetate from (S)-malate (quinone route): step 1/1. The polypeptide is Probable malate:quinone oxidoreductase (Escherichia coli O6:H1 (strain CFT073 / ATCC 700928 / UPEC)).